A 420-amino-acid polypeptide reads, in one-letter code: Glucose-1-phosphate adenylyltransferase (420 aa).

Alpha-D-glucose 1-phosphate is bound by residues Tyr-107, Gly-172, 187 to 188 (EK), and Ser-205.

It belongs to the bacterial/plant glucose-1-phosphate adenylyltransferase family. In terms of assembly, homotetramer.

It catalyses the reaction alpha-D-glucose 1-phosphate + ATP + H(+) = ADP-alpha-D-glucose + diphosphate. The protein operates within glycan biosynthesis; glycogen biosynthesis. Involved in the biosynthesis of ADP-glucose, a building block required for the elongation reactions to produce glycogen. Catalyzes the reaction between ATP and alpha-D-glucose 1-phosphate (G1P) to produce pyrophosphate and ADP-Glc. The sequence is that of Glucose-1-phosphate adenylyltransferase from Rhizobium etli (strain ATCC 51251 / DSM 11541 / JCM 21823 / NBRC 15573 / CFN 42).